The following is a 238-amino-acid chain: Purine nucleoside phosphorylase DeoD-type (238 aa).

H4 provides a ligand contact to a purine D-ribonucleoside. Phosphate contacts are provided by residues G20, R24, R43, and 87–90; that span reads RVGT. Residues 179–181 and 203–204 each bind a purine D-ribonucleoside; these read EME and SN.

It belongs to the PNP/UDP phosphorylase family. Homohexamer; trimer of homodimers.

The enzyme catalyses a purine D-ribonucleoside + phosphate = a purine nucleobase + alpha-D-ribose 1-phosphate. The catalysed reaction is a purine 2'-deoxy-D-ribonucleoside + phosphate = a purine nucleobase + 2-deoxy-alpha-D-ribose 1-phosphate. Functionally, catalyzes the reversible phosphorolytic breakdown of the N-glycosidic bond in the beta-(deoxy)ribonucleoside molecules, with the formation of the corresponding free purine bases and pentose-1-phosphate. The protein is Purine nucleoside phosphorylase DeoD-type of Lacticaseibacillus casei (strain BL23) (Lactobacillus casei).